The sequence spans 606 residues: MSRAAGSTETLKNRFRTDYCGLLNPEVEHQSVKLGGWVHRKRDHGGLIFIDLRDHTGICQIVIQPEEQQLFAKAEQLHLESVICIEGTVVRRSPGAVNPRIPSGEIEVVAAGISVESSAHPLPFPVADEVQTSEELRLKYRFIDLRRDKIHENIIFRSRLTAAIRRYLEEKSFIEIQTPILTSSSPEGARDFLVPSRLHPGKFYALPQAPQQFKQLLMVSGFPRYFQIAPCFRDEDARADRSPGEFYQLDMEMAFIEQDDLFEILEGMFSHLTGSMSTKRIREFPFPRISFRDVMNRYGTDKPDLRIPLEISDVTHLFLQSSFKVFAANTKEGCCVKAMLVKGRGNESRLFYDKAEKRAKELGSGGLAYIQFREDGPKGPLVKFLSGEELAALRELLGVEVGDVVFFGAGKWEQTCRIMGGMRTYFSDLFTLDRDELAFCWVVDFPMYEYNEDQKKIDFSHNPFSMPQGEMDALESMPPLNILAYQYDIVCNGIELSSGAIRNHRPDIMYKAFEIAGYTKEDVDSRFGHMIEAFKLGAPPHGGIAPGLDRLVMILRDEQNIREVIAFPMNQQAQDLMMGSPSEVTPIQLRELHLQVELPKKAEAKP.

Glutamate 187 lines the L-aspartate pocket. The interval 211-214 (QQFK) is aspartate. Residues arginine 233 and histidine 461 each coordinate L-aspartate. 233 to 235 (RDE) contacts ATP. Glutamate 495 contacts ATP. Residue arginine 502 coordinates L-aspartate. 547-550 (GLDR) contributes to the ATP binding site.

Belongs to the class-II aminoacyl-tRNA synthetase family. Type 1 subfamily. In terms of assembly, homodimer.

The protein resides in the cytoplasm. The catalysed reaction is tRNA(Asx) + L-aspartate + ATP = L-aspartyl-tRNA(Asx) + AMP + diphosphate. Functionally, aspartyl-tRNA synthetase with relaxed tRNA specificity since it is able to aspartylate not only its cognate tRNA(Asp) but also tRNA(Asn). Reaction proceeds in two steps: L-aspartate is first activated by ATP to form Asp-AMP and then transferred to the acceptor end of tRNA(Asp/Asn). This chain is Aspartate--tRNA(Asp/Asn) ligase, found in Chlorobium phaeobacteroides (strain DSM 266 / SMG 266 / 2430).